Reading from the N-terminus, the 250-residue chain is 2,3-bisphosphoglycerate-dependent phosphoglycerate mutase (250 aa).

Residues 8–15 (RHGESQWN), 21–22 (TG), arginine 60, 87–90 (ERHY), lysine 98, 114–115 (RR), and 183–184 (GN) contribute to the substrate site. The active-site Tele-phosphohistidine intermediate is the histidine 9. The active-site Proton donor/acceptor is glutamate 87.

It belongs to the phosphoglycerate mutase family. BPG-dependent PGAM subfamily. In terms of assembly, homodimer.

The enzyme catalyses (2R)-2-phosphoglycerate = (2R)-3-phosphoglycerate. The protein operates within carbohydrate degradation; glycolysis; pyruvate from D-glyceraldehyde 3-phosphate: step 3/5. Catalyzes the interconversion of 2-phosphoglycerate and 3-phosphoglycerate. This chain is 2,3-bisphosphoglycerate-dependent phosphoglycerate mutase, found in Bordetella parapertussis (strain 12822 / ATCC BAA-587 / NCTC 13253).